Consider the following 649-residue polypeptide: Ubiquitin-associated and SH3 domain-containing protein B (649 aa).

A Phosphoserine modification is found at Ser20. Position 23 is a phosphothreonine (Thr23). The UBA domain maps to 27–76; the sequence is NRQQRPGTIKHGSALDVLLSMGFPRARAQKALASTGGRSVQAACDWLFSH. Positions 254-319 constitute an SH3 domain; sequence ANHETLQVIY…PENYITKADE (66 aa). The protein tyrosine phosphatase stretch occupies residues 380 to 649; the sequence is GPQKRCLFVC…FNWRETLLQE (270 aa). Arg390 is an active-site residue. The active-site Tele-phosphohistidine intermediate is His391. Residue His576 is part of the active site.

As to quaternary structure, homodimer. Interacts with JAK2 (in vitro). Interacts with CBL. Part of a complex containing CBL and activated EGFR. Interacts with ubiquitin and with mono-ubiquitinated proteins. Interacts with ZAP70 (ubiquitinated form).

Its subcellular location is the cytoplasm. It localises to the nucleus. It catalyses the reaction O-phospho-L-tyrosyl-[protein] + H2O = L-tyrosyl-[protein] + phosphate. In terms of biological role, interferes with CBL-mediated down-regulation and degradation of receptor-type tyrosine kinases. Promotes accumulation of activated target receptors, such as T-cell receptors and EGFR, on the cell surface. Exhibits tyrosine phosphatase activity toward several substrates including EGFR, FAK, SYK, and ZAP70. Down-regulates proteins that are dually modified by both protein tyrosine phosphorylation and ubiquitination. In Homo sapiens (Human), this protein is Ubiquitin-associated and SH3 domain-containing protein B (UBASH3B).